A 151-amino-acid chain; its full sequence is Large ribosomal subunit protein bL9 (151 aa).

The protein belongs to the bacterial ribosomal protein bL9 family.

Binds to the 23S rRNA. The polypeptide is Large ribosomal subunit protein bL9 (Francisella philomiragia subsp. philomiragia (strain ATCC 25017 / CCUG 19701 / FSC 153 / O#319-036)).